Reading from the N-terminus, the 403-residue chain is Cysteine desulfurase IscS (403 aa).

Pyridoxal 5'-phosphate contacts are provided by residues 75 to 76 (AT), Asn155, Gln183, and 203 to 205 (SAH). Lys206 bears the N6-(pyridoxal phosphate)lysine mark. Thr243 lines the pyridoxal 5'-phosphate pocket. The Cysteine persulfide intermediate role is filled by Cys328. Residue Cys328 participates in [2Fe-2S] cluster binding.

Belongs to the class-V pyridoxal-phosphate-dependent aminotransferase family. NifS/IscS subfamily. In terms of assembly, homodimer. Forms a heterotetramer with IscU, interacts with other sulfur acceptors. Pyridoxal 5'-phosphate is required as a cofactor.

Its subcellular location is the cytoplasm. The catalysed reaction is (sulfur carrier)-H + L-cysteine = (sulfur carrier)-SH + L-alanine. The protein operates within cofactor biosynthesis; iron-sulfur cluster biosynthesis. Its function is as follows. Master enzyme that delivers sulfur to a number of partners involved in Fe-S cluster assembly, tRNA modification or cofactor biosynthesis. Catalyzes the removal of elemental sulfur atoms from cysteine to produce alanine. Functions as a sulfur delivery protein for Fe-S cluster synthesis onto IscU, an Fe-S scaffold assembly protein, as well as other S acceptor proteins. The sequence is that of Cysteine desulfurase IscS from Psychromonas ingrahamii (strain DSM 17664 / CCUG 51855 / 37).